Consider the following 515-residue polypeptide: 1-pyrroline-5-carboxylate dehydrogenase (515 aa).

Active-site residues include Glu286 and Cys320.

The protein belongs to the aldehyde dehydrogenase family. RocA subfamily.

It catalyses the reaction L-glutamate 5-semialdehyde + NAD(+) + H2O = L-glutamate + NADH + 2 H(+). It functions in the pathway amino-acid degradation; L-proline degradation into L-glutamate; L-glutamate from L-proline: step 2/2. This is 1-pyrroline-5-carboxylate dehydrogenase from Bacillus anthracis (strain A0248).